The primary structure comprises 1059 residues: Zinc finger protein 865 (1059 aa).

3 disordered regions span residues 1-24 (MEAN…EDGV), 58-142 (LPCA…DAAF), and 161-206 (NLKR…CDPT). Over residues 8–21 (SGAGGGGSSGIGGE) the composition is skewed to gly residues. Over residues 61-78 (APGPPPQPPPQPPPPQYD) the composition is skewed to pro residues. Low complexity predominate over residues 93 to 119 (SSSSSSSSSSSSSSSSSSSSSSSSSQA). Pro residues-rich tracts occupy residues 124-137 (PPLP…PPPL) and 183-198 (APGP…PGPP). 2 C2H2-type zinc fingers span residues 224-246 (FPCG…MLVH) and 252-274 (YECG…RRCH). A disordered region spans residues 275–342 (KDVPPAAGGP…PAGVGVPPPA (68 aa)). The span at 281 to 296 (AGGPPQPGPHLPPLGL) shows a compositional bias: pro residues. 2 stretches are compositionally biased toward low complexity: residues 297–316 (PAPA…SSGP) and 324–337 (APSA…AGVG). 4 consecutive C2H2-type zinc fingers follow at residues 350 to 372 (FACP…QIIH), 378 to 400 (FSCS…VKTH), 407 to 429 (LPCG…QAAH), and 441 to 463 (YPCD…KAAH). Residues 461 to 503 (AAHAPPAAAAEAPKDGAASAPQPPPTFPPGPYLLPPDPPTTDS) are disordered. A compositionally biased stretch (low complexity) spans 463 to 480 (HAPPAAAAEAPKDGAASA). Positions 481 to 499 (PQPPPTFPPGPYLLPPDPP) are enriched in pro residues. 5 C2H2-type zinc fingers span residues 550–572 (FCCG…ERIH), 578–600 (HQCP…HVVH), 606–628 (YKCE…RQVH), 669–691 (YACS…KEVH), and 697–719 (YGCD…KLVH). A disordered region spans residues 726 to 747 (LLPPAPGGLQPPDGSSGTDAAS). 9 C2H2-type zinc fingers span residues 792 to 814 (FSCA…KYVH), 820 to 842 (LGCG…RRSH), 848 to 870 (FRCP…QRCH), 876 to 898 (YRCG…RVVH), 904 to 926 (FKCG…RRLH), 932 to 954 (QRCS…QRLH), 960 to 982 (YRCE…QRAH), 989 to 1011 (LRCP…LAAH), and 1017 to 1039 (FRCS…RLAH). Lys802 is covalently cross-linked (Glycyl lysine isopeptide (Lys-Gly) (interchain with G-Cter in SUMO2)). Lys1040 participates in a covalent cross-link: Glycyl lysine isopeptide (Lys-Gly) (interchain with G-Cter in SUMO2).

The protein belongs to the krueppel C2H2-type zinc-finger protein family.

The protein resides in the nucleus. Its function is as follows. May be involved in transcriptional regulation. This chain is Zinc finger protein 865 (ZNF865), found in Homo sapiens (Human).